We begin with the raw amino-acid sequence, 383 residues long: Outer membrane protein S2 (383 aa).

The first 21 residues, 1–21, serve as a signal peptide directing secretion; the sequence is MKRKVLALVIPALLAAGAAHA.

Belongs to the Gram-negative porin family. In terms of assembly, homotrimer.

Its subcellular location is the cell outer membrane. In terms of biological role, forms pores that allow passive diffusion of small molecules across the outer membrane. This chain is Outer membrane protein S2 (ompS2), found in Salmonella typhi.